The sequence spans 366 residues: Chorismate synthase (366 aa).

NADP(+) is bound by residues Arg-47 and Arg-53. Residues 124 to 126, Gly-286, 301 to 305, and Arg-327 contribute to the FMN site; these read RSS and KPTAT.

It belongs to the chorismate synthase family. In terms of assembly, homotetramer. FMNH2 serves as cofactor.

The catalysed reaction is 5-O-(1-carboxyvinyl)-3-phosphoshikimate = chorismate + phosphate. Its pathway is metabolic intermediate biosynthesis; chorismate biosynthesis; chorismate from D-erythrose 4-phosphate and phosphoenolpyruvate: step 7/7. Its function is as follows. Catalyzes the anti-1,4-elimination of the C-3 phosphate and the C-6 proR hydrogen from 5-enolpyruvylshikimate-3-phosphate (EPSP) to yield chorismate, which is the branch point compound that serves as the starting substrate for the three terminal pathways of aromatic amino acid biosynthesis. This reaction introduces a second double bond into the aromatic ring system. In Microcystis aeruginosa (strain NIES-843 / IAM M-2473), this protein is Chorismate synthase.